The chain runs to 229 residues: Demethylmenaquinone methyltransferase (229 aa).

S-adenosyl-L-methionine is bound by residues Thr-58, Asp-78, and 100–101 (DA).

It belongs to the class I-like SAM-binding methyltransferase superfamily. MenG/UbiE family.

The catalysed reaction is a 2-demethylmenaquinol + S-adenosyl-L-methionine = a menaquinol + S-adenosyl-L-homocysteine + H(+). It functions in the pathway quinol/quinone metabolism; menaquinone biosynthesis; menaquinol from 1,4-dihydroxy-2-naphthoate: step 2/2. Its function is as follows. Methyltransferase required for the conversion of demethylmenaquinol (DMKH2) to menaquinol (MKH2). The protein is Demethylmenaquinone methyltransferase of Thermotoga maritima (strain ATCC 43589 / DSM 3109 / JCM 10099 / NBRC 100826 / MSB8).